The chain runs to 299 residues: Putative ankyrin repeat protein R864 (299 aa).

7 ANK repeats span residues serine 78 to serine 107, asparagine 108 to serine 137, asparagine 139 to serine 167, asparagine 168 to serine 197, tyrosine 199 to alanine 227, tyrosine 228 to asparagine 257, and aspartate 258 to threonine 287.

This is Putative ankyrin repeat protein R864 from Acanthamoeba polyphaga mimivirus (APMV).